Reading from the N-terminus, the 106-residue chain is A-type ATP synthase subunit F (106 aa).

It belongs to the V-ATPase F subunit family. In terms of assembly, has multiple subunits with at least A(3), B(3), C, D, E, F, H, I and proteolipid K(x).

It is found in the cell membrane. In terms of biological role, component of the A-type ATP synthase that produces ATP from ADP in the presence of a proton gradient across the membrane. The polypeptide is A-type ATP synthase subunit F (Methanosphaera stadtmanae (strain ATCC 43021 / DSM 3091 / JCM 11832 / MCB-3)).